The following is a 283-amino-acid chain: MIDTTAPLSLLEALVLGIVQGLTEFLPISSTAHLRVVPALLGWDDPGVSVTAAIQLGSVAAVIAYFRRDLTQVLTGISRAVRHGQWRDPDARLGVAMVIGTLPILVLGLGIKFFWHAGYASSPLRSVPSIAIVSIVMALFLAMAECMGPRLKQLGGVTGRDGFVVGLAQALAVIPGVSRSGSTLTASLFDGWNRADAARFSFLLGIPAISIAGLVELKSALSTSAGAGPLPLLVGIFSAAVVSWLAIDWLLRFLQRNSTWIFVGYRLVFGAGLLVWWAFKSAN.

Transmembrane regions (helical) follow at residues 46-66 (PGVSVTAAIQLGSVAAVIAYF), 95-115 (VAMVIGTLPILVLGLGIKFFW), 127-147 (VPSIAIVSIVMALFLAMAECM), 154-174 (LGGVTGRDGFVVGLAQALAVI), 200-220 (FSFLLGIPAISIAGLVELKSA), 227-247 (AGPLPLLVGIFSAAVVSWLAI), and 259-279 (TWIFVGYRLVFGAGLLVWWAF).

It belongs to the UppP family.

The protein resides in the cell inner membrane. It carries out the reaction di-trans,octa-cis-undecaprenyl diphosphate + H2O = di-trans,octa-cis-undecaprenyl phosphate + phosphate + H(+). Catalyzes the dephosphorylation of undecaprenyl diphosphate (UPP). Confers resistance to bacitracin. The polypeptide is Undecaprenyl-diphosphatase (Synechococcus sp. (strain CC9902)).